A 324-amino-acid chain; its full sequence is Probable tRNA pseudouridine synthase B (324 aa).

Asp72 (nucleophile) is an active-site residue. Residues Leu239–Met314 enclose the PUA domain.

This sequence belongs to the pseudouridine synthase TruB family. Type 2 subfamily.

It catalyses the reaction uridine(55) in tRNA = pseudouridine(55) in tRNA. Its function is as follows. Could be responsible for synthesis of pseudouridine from uracil-55 in the psi GC loop of transfer RNAs. This chain is Probable tRNA pseudouridine synthase B, found in Methanothermobacter thermautotrophicus (strain ATCC 29096 / DSM 1053 / JCM 10044 / NBRC 100330 / Delta H) (Methanobacterium thermoautotrophicum).